The primary structure comprises 852 residues: Serine/threonine-protein phosphatase 6 regulatory subunit 3-A (852 aa).

Disordered regions lie at residues 610 to 653 (NIAF…VNHE), 714 to 742 (NTKE…VNAS), and 817 to 852 (DSAM…NGPV). Acidic residues predominate over residues 627 to 638 (DSEESTDSEEEE). Residues 714–732 (NTKETIRSSSPVEMETSTE) show a composition bias toward polar residues. Low complexity predominate over residues 828-840 (PSSSSQEQRTSEQ).

This sequence belongs to the SAPS family.

Regulatory subunit of protein phosphatase 6 (PP6). May function as a scaffolding PP6 subunit. This Xenopus laevis (African clawed frog) protein is Serine/threonine-protein phosphatase 6 regulatory subunit 3-A (ppp6r3-a).